Here is a 366-residue protein sequence, read N- to C-terminus: MALPPGPAALRHTLLLLPALLSSGWGELEPQIDGQTWAERALRENERHAFTCRVAGGPGTPRLAWYLDGQLQEASTSRLLSVGGEAFSGGTSTFTVTAHRAQHELNCSLQDPRSGRSANASVILNVQFKPEIAQVGAKYQEAQGPGLLVVLFALVRANPPANVTWIDQDGPVTVNTSDFLVLDAQNYPWLTNHTVQLQLRSLAHNLSVVATNDVGVTSASLPAPGLLATRVEVPLLGIVVAAGLALGTLVGFSTLVACLVCRKEKKTKGPSRHPSLISSDSNNLKLNNVRLPRENMSLPSNLQLNDLTPDSRAVKPADRQMAQNNSRPELLDPEPGGLLTSQGFIRLPVLGYIYRVSSVSSDEIWL.

The signal sequence occupies residues 1–26 (MALPPGPAALRHTLLLLPALLSSGWG). Residues 27 to 232 (ELEPQIDGQT…APGLLATRVE (206 aa)) lie on the Extracellular side of the membrane. Positions 30–123 (PQIDGQTWAE…SGRSANASVI (94 aa)) constitute an Ig-like domain. Cysteines 52 and 107 form a disulfide. Asn-106, Asn-162, Asn-175, Asn-192, and Asn-205 each carry an N-linked (GlcNAc...) asparagine glycan. The helical transmembrane segment at 233–253 (VPLLGIVVAAGLALGTLVGFS) threads the bilayer. The Cytoplasmic portion of the chain corresponds to 254–366 (TLVACLVCRK…SSVSSDEIWL (113 aa)). A compositionally biased stretch (polar residues) spans 299–308 (PSNLQLNDLT). Residues 299–335 (PSNLQLNDLTPDSRAVKPADRQMAQNNSRPELLDPEP) are disordered.

Interacts with GRIN2B. As to expression, expressed throughout the brain with higher levels in the pyramidal cell layer of the hippocampal CA1 and CA3 regions. Also highly expressed within the hippocampal dentate gyrus region and cerebellum and in scattered neurons in the cerebral cortex.

It localises to the cell membrane. It is found in the secreted. Its subcellular location is the late endosome. The protein resides in the lysosome. In neurons, modulates the degradation of NMDA receptor GRIN2B subunit. Plays a role in the regulation of neuronal excitability. In Homo sapiens (Human), this protein is Transmembrane protein 25 (TMEM25).